The following is a 225-amino-acid chain: Transcriptional activator protein CUP2 (225 aa).

The copper-fist DNA-binding region spans 1–40 (MVVINGVKYACETCIRGHRAAQCTHTDGPLQMIRRKGRPS). Residues 1–108 (MVVINGVKYA…KSKGGSCHRR (108 aa)) form a binds copper and DNA region. 4 residues coordinate Zn(2+): Cys-11, Cys-14, Cys-23, and His-25. Residues 109 to 225 (ANDEAAHVNG…QVSSHNSHSQ (117 aa)) form a required for transcriptional activation region.

It is found in the nucleus. Its function is as follows. Trans-acting regulatory protein that activates transcription of the CUP1 gene (metallothionein) in response to copper ions. Binds to the CUP1 UAS sequence 5'-GCTTCTTTTCCGCTGA-3'. Binds DNA only in presence of copper or silver. Copper seems to alter the conformation of the protein. This chain is Transcriptional activator protein CUP2 (CUP2), found in Saccharomyces cerevisiae (strain ATCC 204508 / S288c) (Baker's yeast).